We begin with the raw amino-acid sequence, 85 residues long: U4-theraphotoxin-Hhn1g (85 aa).

Positions 1 to 22 are cleaved as a signal peptide; that stretch reads MKVTLIAILTCAAVLVLHTTAA. A propeptide spanning residues 23-48 is cleaved from the precursor; the sequence is EELEAESQLMEVGMPDTELAAVDEER. Cystine bridges form between Cys52/Cys66, Cys56/Cys77, and Cys71/Cys82.

It belongs to the neurotoxin 12 (Hwtx-2) family. 02 (Hwtx-2) subfamily. As to expression, expressed by the venom gland.

Its subcellular location is the secreted. Its function is as follows. Postsynaptic neurotoxin. The protein is U4-theraphotoxin-Hhn1g of Cyriopagopus hainanus (Chinese bird spider).